Consider the following 137-residue polypeptide: Small ribosomal subunit protein uS12 (137 aa).

Residues 1–55 form a disordered region; sequence MPTINQLVRKPRQSKSKKSDSPALNRNFNSKKKKFTDLNSPQKRGVCTRVGTMTP. Aspartate 102 carries the 3-methylthioaspartic acid modification. A disordered region spans residues 118-137; the sequence is SGVDGRRQGRSLYGTKKPKK.

The protein belongs to the universal ribosomal protein uS12 family. Part of the 30S ribosomal subunit. Contacts proteins S8 and S17. May interact with IF1 in the 30S initiation complex.

In terms of biological role, with S4 and S5 plays an important role in translational accuracy. Functionally, interacts with and stabilizes bases of the 16S rRNA that are involved in tRNA selection in the A site and with the mRNA backbone. Located at the interface of the 30S and 50S subunits, it traverses the body of the 30S subunit contacting proteins on the other side and probably holding the rRNA structure together. The combined cluster of proteins S8, S12 and S17 appears to hold together the shoulder and platform of the 30S subunit. This is Small ribosomal subunit protein uS12 from Staphylococcus saprophyticus subsp. saprophyticus (strain ATCC 15305 / DSM 20229 / NCIMB 8711 / NCTC 7292 / S-41).